The primary structure comprises 160 residues: Crossover junction endodeoxyribonuclease RuvC (160 aa).

Active-site residues include Asp9, Glu68, and Asp141. Mg(2+) is bound by residues Asp9, Glu68, and Asp141.

The protein belongs to the RuvC family. In terms of assembly, homodimer which binds Holliday junction (HJ) DNA. The HJ becomes 2-fold symmetrical on binding to RuvC with unstacked arms; it has a different conformation from HJ DNA in complex with RuvA. In the full resolvosome a probable DNA-RuvA(4)-RuvB(12)-RuvC(2) complex forms which resolves the HJ. It depends on Mg(2+) as a cofactor.

It is found in the cytoplasm. It catalyses the reaction Endonucleolytic cleavage at a junction such as a reciprocal single-stranded crossover between two homologous DNA duplexes (Holliday junction).. The RuvA-RuvB-RuvC complex processes Holliday junction (HJ) DNA during genetic recombination and DNA repair. Endonuclease that resolves HJ intermediates. Cleaves cruciform DNA by making single-stranded nicks across the HJ at symmetrical positions within the homologous arms, yielding a 5'-phosphate and a 3'-hydroxyl group; requires a central core of homology in the junction. The consensus cleavage sequence is 5'-(A/T)TT(C/G)-3'. Cleavage occurs on the 3'-side of the TT dinucleotide at the point of strand exchange. HJ branch migration catalyzed by RuvA-RuvB allows RuvC to scan DNA until it finds its consensus sequence, where it cleaves and resolves the cruciform DNA. The sequence is that of Crossover junction endodeoxyribonuclease RuvC from Campylobacter jejuni subsp. jejuni serotype O:23/36 (strain 81-176).